The chain runs to 493 residues: Tripartite motif-containing protein 5 (493 aa).

At alanine 2 the chain carries N-acetylalanine. Residues 15–59 (CPICLELLTQPLSLDCGHSFCQACLTANHKKSMLDKGESSCPVCR) form an RING-type zinc finger. Phosphoserine is present on serine 86. The segment at 90–132 (QKVDHCARHGEKLLLFCQEDGKVICWLCERSQEHRGHHTFLTE) adopts a B box-type zinc-finger fold. The Zn(2+) site is built by cysteine 95, histidine 98, cysteine 117, and histidine 123. Positions 131–240 (TEEVAREYQV…LISDLERRLQ (110 aa)) form a coiled coil. Positions 185–198 (FEQLRDILDWEESN) are required for interaction with GABARAP and for autophagy. A B30.2/SPRY domain is found at 281–493 (LKGMLEVFRE…VPMTLCSPSS (213 aa)).

The protein belongs to the TRIM/RBCC family. As to quaternary structure, can form homodimers and homotrimers. In addition to lower-order dimerization, also exhibits a higher-order multimerization and both low- and high-order multimerizations are essential for its restriction activity. Interacts with BTBD1 and BTBD2. Interacts with PSMC4, PSMC5, PSMD7 and HSPA8/HSC70. Interacts (via B30.2/SPRY domain) with HSPA1A/B. Interacts with PSMC2, MAP3K7/TAK1, TAB2 and TAB3. Interacts with SQSTM1. Interacts with TRIM6 and TRIM34. Interacts with ULK1 (phosphorylated form), GABARAP, GABARAPL1, GABARAPL2, MAP1LC3A, MAP1LC3C and BECN1. Post-translationally, degraded in a proteasome-independent fashion in the absence of viral infection but in a proteasome-dependent fashion following exposure to restriction sensitive virus. In terms of processing, autoubiquitinated in a RING finger- and UBE2D2-dependent manner. Monoubiquitinated by TRIM21. Deubiquitinated by Yersinia YopJ. Ubiquitination may not lead to proteasomal degradation.

The protein localises to the cytoplasm. Its subcellular location is the nucleus. It catalyses the reaction S-ubiquitinyl-[E2 ubiquitin-conjugating enzyme]-L-cysteine + [acceptor protein]-L-lysine = [E2 ubiquitin-conjugating enzyme]-L-cysteine + N(6)-ubiquitinyl-[acceptor protein]-L-lysine.. Its pathway is protein modification; protein ubiquitination. Its function is as follows. Capsid-specific restriction factor that prevents infection from non-host-adapted retroviruses. Blocks viral replication early in the life cycle, after viral entry but before reverse transcription. In addition to acting as a capsid-specific restriction factor, also acts as a pattern recognition receptor that activates innate immune signaling in response to the retroviral capsid lattice. Binding to the viral capsid triggers its E3 ubiquitin ligase activity, and in concert with the heterodimeric ubiquitin conjugating enzyme complex UBE2V1-UBE2N (also known as UBC13-UEV1A complex) generates 'Lys-63'-linked polyubiquitin chains, which in turn are catalysts in the autophosphorylation of the MAP3K7/TAK1 complex (includes TAK1, TAB2, and TAB3). Activation of the MAP3K7/TAK1 complex by autophosphorylation results in the induction and expression of NF-kappa-B and MAPK-responsive inflammatory genes, thereby leading to an innate immune response in the infected cell. Plays a role in regulating autophagy through activation of autophagy regulator BECN1 by causing its dissociation from its inhibitors BCL2 and TAB2. This chain is Tripartite motif-containing protein 5 (TRIM5), found in Pan paniscus (Pygmy chimpanzee).